Consider the following 332-residue polypeptide: 3-dehydroquinate synthase (332 aa).

Residues 55-60, 89-93, 113-114, K126, K134, and 152-155 each bind NAD(+); these read DGEEYK, GVITD, TT, and TLST. 3 residues coordinate Zn(2+): E167, H226, and H242.

It belongs to the sugar phosphate cyclases superfamily. Dehydroquinate synthase family. NAD(+) is required as a cofactor. The cofactor is Co(2+). It depends on Zn(2+) as a cofactor.

The protein localises to the cytoplasm. The catalysed reaction is 7-phospho-2-dehydro-3-deoxy-D-arabino-heptonate = 3-dehydroquinate + phosphate. Its pathway is metabolic intermediate biosynthesis; chorismate biosynthesis; chorismate from D-erythrose 4-phosphate and phosphoenolpyruvate: step 2/7. Its function is as follows. Catalyzes the conversion of 3-deoxy-D-arabino-heptulosonate 7-phosphate (DAHP) to dehydroquinate (DHQ). The polypeptide is 3-dehydroquinate synthase (Pyrococcus abyssi (strain GE5 / Orsay)).